We begin with the raw amino-acid sequence, 550 residues long: Hydroxylamine reductase (550 aa).

The [2Fe-2S] cluster site is built by Cys-3, Cys-6, Cys-18, and Cys-25. Hybrid [4Fe-2O-2S] cluster-binding residues include His-249, Glu-273, Cys-317, Cys-405, Cys-433, Cys-458, Glu-492, and Lys-494. At Cys-405 the chain carries Cysteine persulfide.

The protein belongs to the HCP family. [2Fe-2S] cluster is required as a cofactor. Hybrid [4Fe-2O-2S] cluster serves as cofactor.

It localises to the cytoplasm. The catalysed reaction is A + NH4(+) + H2O = hydroxylamine + AH2 + H(+). Functionally, catalyzes the reduction of hydroxylamine to form NH(3) and H(2)O. This Escherichia coli O6:H1 (strain CFT073 / ATCC 700928 / UPEC) protein is Hydroxylamine reductase.